Reading from the N-terminus, the 673-residue chain is Xyloglucan glycosyltransferase 4 (673 aa).

A run of 2 helical transmembrane segments spans residues 90–110 (FIKACLVISIIALSIEIVAHF) and 144–164 (IAPLVISLSRFCTVLFLIQSL). Asp-238 is an active-site residue. Residues Asp-297 and Asp-299 each contribute to the substrate site. Asp-391 is a catalytic residue. 2 helical membrane-spanning segments follow: residues 469 to 489 (LILPFYSFTLFCIILPLTMFI) and 494 to 514 (LPLWIICYVPIFISLLNILPS). Phosphoserine is present on Ser-581. 2 consecutive transmembrane segments (helical) span residues 623–643 (VFKKELGLAFLLLTAAARSFL) and 648–668 (LHFYFLLFQGLSFLVVGLDLI).

The protein belongs to the glycosyltransferase 2 family. Plant cellulose synthase-like C subfamily. In terms of assembly, homodimer. Interacts with XXT5. Interacts with FUT1, MUR3 and XLT2. In terms of tissue distribution, expressed in seedlings, roots, leaves, stems, flowers and seeds.

The protein resides in the golgi apparatus membrane. Beta-1,4-glucan synthase rather involved in the synthesis of the xyloglucan backbone than cellulose. Seems to work simultaneously with xyloglucan 6-xylosyltransferase. Xyloglucan is a noncellulosic polysaccharides of plant cell wall and consists of a glucan backbone substituted by xylose, galactose and fucose. Associates with other xyloglucan-synthesizing enzymes to form multiprotein complexes for xyloglucan synthesis in the Golgi. This is Xyloglucan glycosyltransferase 4 from Arabidopsis thaliana (Mouse-ear cress).